The following is a 478-amino-acid chain: Ribosomal RNA small subunit methyltransferase F (478 aa).

S-adenosyl-L-methionine is bound by residues 121-127 (ASAPGSK), E145, D172, and D190. The active-site Nucleophile is the C243.

This sequence belongs to the class I-like SAM-binding methyltransferase superfamily. RsmB/NOP family.

It localises to the cytoplasm. The enzyme catalyses cytidine(1407) in 16S rRNA + S-adenosyl-L-methionine = 5-methylcytidine(1407) in 16S rRNA + S-adenosyl-L-homocysteine + H(+). Functionally, specifically methylates the cytosine at position 1407 (m5C1407) of 16S rRNA. This Shewanella sediminis (strain HAW-EB3) protein is Ribosomal RNA small subunit methyltransferase F.